The sequence spans 247 residues: Cell division protein ZapD (247 aa).

The protein belongs to the ZapD family. Interacts with FtsZ.

Its subcellular location is the cytoplasm. Its function is as follows. Cell division factor that enhances FtsZ-ring assembly. Directly interacts with FtsZ and promotes bundling of FtsZ protofilaments, with a reduction in FtsZ GTPase activity. In Escherichia coli O157:H7, this protein is Cell division protein ZapD.